Here is a 365-residue protein sequence, read N- to C-terminus: Succinyl-diaminopimelate desuccinylase (365 aa).

H64 contributes to the Zn(2+) binding site. The active site involves D66. D95 lines the Zn(2+) pocket. The active-site Proton acceptor is the E125. Zn(2+) is bound by residues E126, E154, and H339.

It belongs to the peptidase M20A family. DapE subfamily. In terms of assembly, homodimer. Zn(2+) is required as a cofactor. Co(2+) serves as cofactor.

It catalyses the reaction N-succinyl-(2S,6S)-2,6-diaminopimelate + H2O = (2S,6S)-2,6-diaminopimelate + succinate. The protein operates within amino-acid biosynthesis; L-lysine biosynthesis via DAP pathway; LL-2,6-diaminopimelate from (S)-tetrahydrodipicolinate (succinylase route): step 3/3. Functionally, catalyzes the hydrolysis of N-succinyl-L,L-diaminopimelic acid (SDAP), forming succinate and LL-2,6-diaminopimelate (DAP), an intermediate involved in the bacterial biosynthesis of lysine and meso-diaminopimelic acid, an essential component of bacterial cell walls. This is Succinyl-diaminopimelate desuccinylase from Campylobacter curvus (strain 525.92).